A 67-amino-acid polypeptide reads, in one-letter code: uncharacterized protein (67 aa).

Belongs to the flocculin family.

This is an uncharacterized protein from Saccharomyces cerevisiae (strain ATCC 204508 / S288c) (Baker's yeast).